The following is a 604-amino-acid chain: Kelch-like protein 20 (604 aa).

The region spanning 63 to 130 is the BTB domain; the sequence is CDVVLVVGAK…SYTSQITVEE (68 aa). The BACK domain maps to 165–267; that stretch reads CLGIRAFADT…SPKFLVGTVG (103 aa). Kelch repeat units follow at residues 314 to 360, 362 to 408, 409 to 455, 457 to 502, 504 to 549, and 551 to 596; these read VLFA…VLDD, LYAV…VLGG, YLYA…VLGG, LYAV…VYQD, IYAV…VVNG, and LMAV…VIKM.

In terms of assembly, component of the BCR(KLHL20) E3 ubiquitin ligase complex, at least composed of cul3, klhl20 and rbx1.

Its subcellular location is the cytoplasm. The protein resides in the perinuclear region. It is found in the nucleus. It participates in protein modification; protein ubiquitination. Substrate-specific adapter of a BCR (BTB-CUL3-RBX1) E3 ubiquitin-protein ligase complex involved in interferon response and anterograde Golgi to endosome transport. The BCR(KLHL20) E3 ubiquitin ligase complex mediates the ubiquitination of target proteins, leading to their degradation by the proteasome. It also specifically mediates 'Lys-33'-linked ubiquitination. The sequence is that of Kelch-like protein 20 (klhl20) from Xenopus laevis (African clawed frog).